The sequence spans 63 residues: Sec-independent protein translocase protein TatA (63 aa).

Residues 1 to 21 (MGSLSMWHWLIVLVIVLLLFG) traverse the membrane as a helical segment. Positions 43–63 (MTDEDAPETAKTVDHKADETK) are disordered. The span at 53 to 63 (KTVDHKADETK) shows a compositional bias: basic and acidic residues.

The protein belongs to the TatA/E family. The Tat system comprises two distinct complexes: a TatABC complex, containing multiple copies of TatA, TatB and TatC subunits, and a separate TatA complex, containing only TatA subunits. Substrates initially bind to the TatABC complex, which probably triggers association of the separate TatA complex to form the active translocon.

The protein localises to the cell inner membrane. Part of the twin-arginine translocation (Tat) system that transports large folded proteins containing a characteristic twin-arginine motif in their signal peptide across membranes. TatA could form the protein-conducting channel of the Tat system. This chain is Sec-independent protein translocase protein TatA, found in Rhizobium etli (strain ATCC 51251 / DSM 11541 / JCM 21823 / NBRC 15573 / CFN 42).